The chain runs to 204 residues: Wound-induced proteinase inhibitor 2 (204 aa).

An N-terminal signal peptide occupies residues 1-25 (MAVPKEVSFLASLLVLGILLLHVDA). 3 consecutive repeat copies span residues 25-67 (AKAC…DPNN), 68-125 (PKPC…DPNN), and 126-183 (PKPC…DPNH). 6 cysteine pairs are disulfide-bonded: C28/C100, C38/C75, C41/C59, C42/C71, C48/C84, and C99/C117. The stretch at 184 to 204 (PKACPKNCDPNIAYSLCLYEK) is one 4; truncated repeat.

Belongs to the protease inhibitor I20 (potato type II proteinase inhibitor) family.

The polypeptide is Wound-induced proteinase inhibitor 2 (PIN2) (Capsicum annuum (Capsicum pepper)).